A 457-amino-acid chain; its full sequence is Peptidyl-prolyl cis-trans isomerase FKBP5 (457 aa).

M1 carries the N-acetylmethionine modification. Residues M1–R11 show a composition bias toward basic and acidic residues. The segment at M1 to K28 is disordered. K28 carries the post-translational modification N6-acetyllysine. 2 PPIase FKBP-type domains span residues G50–K138 and G165–E251. TPR repeat units follow at residues A268–E301, L317–N350, and E351–N384. Residues E424–V457 are disordered. The residue at position 445 (S445) is a Phosphoserine. Basic and acidic residues predominate over residues A447–V457.

As to quaternary structure, part of a heteromultimeric cytoplasmic complex with HSP90AA1, HSPA1A/HSPA1B and steroid receptors. Upon ligand binding dissociates from the complex and FKBP4 takes its place. Interacts with functionally mature heterooligomeric progesterone receptor complexes along with HSP90 and TEBP. Interacts with NR3C1. Interacts with Akt/AKT1 and PHLPP1; enhancing dephosphorylation and subsequent activation of Akt/AKT1. Interacts with IFI44L; this interaction modulates the kinase activity of IKBKB and IKBKE. Interacts with IKBKB and IKBKE. Acetylation impairs ability to promote interaction between Akt/AKT1 and PHLPP1. Deacetylation by SIRT7 promotes interaction between Akt/AKT1 and PHLPP1, leading to suppress Akt/AKT1 activation. Post-translationally, ubiquitinated, leading to degradation in a proteasome-dependent manner. Deubiquitinated by USP49, leading to stabilization.

It localises to the cytoplasm. The protein localises to the nucleus. It carries out the reaction [protein]-peptidylproline (omega=180) = [protein]-peptidylproline (omega=0). Inhibited by both FK506 and rapamycin. In terms of biological role, immunophilin protein with PPIase and co-chaperone activities. Component of unligated steroid receptors heterocomplexes through interaction with heat-shock protein 90 (HSP90). Plays a role in the intracellular trafficking of heterooligomeric forms of steroid hormone receptors maintaining the complex into the cytoplasm when unliganded. Acts as a regulator of Akt/AKT1 activity by promoting the interaction between Akt/AKT1 and PHLPP1, thereby enhancing dephosphorylation and subsequent activation of Akt/AKT1. Interacts with IKBKE and IKBKB which facilitates IKK complex assembly leading to increased IKBKE and IKBKB kinase activity, NF-kappaB activation, and IFN production. The sequence is that of Peptidyl-prolyl cis-trans isomerase FKBP5 (FKBP5) from Saguinus oedipus (Cotton-top tamarin).